The sequence spans 220 residues: MEGVLNFLTNINVIFTLLGYLIGGIPFGYALMKIFYGMDITKIGSGGIGATNVLRALQSKGVSNAKQMALLVLILDLFKGMFAVFLSKLFGLDYSLQWMVAIASILGHCYSPFLNFNGGKGVSTIMGSVVLLIPIESLIGLTVWFFVGKVLKISSLASILGVGTATVLIFFVPYMHIPDSVNILKEVDTQTPMVLIFIFTLIKHAGNIFNLLAGKEKKVL.

Transmembrane regions (helical) follow at residues Ile-11–Leu-31, Leu-70–Phe-90, Leu-96–Phe-116, Gly-127–Val-147, Ile-153–Pro-173, and Met-193–Ala-213.

Belongs to the PlsY family. As to quaternary structure, probably interacts with PlsX.

The protein localises to the cell inner membrane. The enzyme catalyses an acyl phosphate + sn-glycerol 3-phosphate = a 1-acyl-sn-glycero-3-phosphate + phosphate. Its pathway is lipid metabolism; phospholipid metabolism. In terms of biological role, catalyzes the transfer of an acyl group from acyl-phosphate (acyl-PO(4)) to glycerol-3-phosphate (G3P) to form lysophosphatidic acid (LPA). This enzyme utilizes acyl-phosphate as fatty acyl donor, but not acyl-CoA or acyl-ACP. The chain is Glycerol-3-phosphate acyltransferase from Helicobacter pylori (strain HPAG1).